Reading from the N-terminus, the 440-residue chain is Lysine histidine transporter-like 6 (440 aa).

Residues 1-10 (MVSSSPVSPS) show a composition bias toward polar residues. A disordered region spans residues 1–25 (MVSSSPVSPSKETDRKSGEKWTAED). At 1 to 31 (MVSSSPVSPSKETDRKSGEKWTAEDPSRPAK) the chain is on the cytoplasmic side. A compositionally biased stretch (basic and acidic residues) spans 11–25 (KETDRKSGEKWTAED). Residues 32–51 (WWYSTFHTVTAMIGAGVLSL) form a helical membrane-spanning segment. At 52–61 (PYAMAYLGWG) the chain is on the extracellular side. A helical transmembrane segment spans residues 62-82 (PGTFVLAMTWGLTLNTMWQMV). Residues 83–109 (QLHECVPGTRFDRYIDLGRYAFGPKLG) are Cytoplasmic-facing. The chain crosses the membrane as a helical span at residues 110–130 (PWIVLPQQLIVQVGCNIVYMV). Topologically, residues 131–152 (TGGKCLKQFVEITCSTCTPVRQ) are extracellular. Residues 153–173 (SYWILGFGGVHFILSQLPNFN) traverse the membrane as a helical segment. Residue Ser-174 is a topological domain, cytoplasmic. The helical transmembrane segment at 175 to 195 (VAGVSLAAAVMSLCYSTIAWG) threads the bilayer. Topologically, residues 196 to 221 (GSIAHGRVPDVSYDYKATNPGDFTFR) are extracellular. The chain crosses the membrane as a helical span at residues 222–242 (VFNALGQISFAFAGHAVALEI). Residues 243 to 261 (QATMPSTPERPSKVPMWQG) are Cytoplasmic-facing. Residues 262–282 (VIGAYVVNAVCYFPVALICYW) traverse the membrane as a helical segment. At 283–300 (AFGQDVDDNVLMNLQRPA) the chain is on the extracellular side. A helical membrane pass occupies residues 301–321 (WLIAAANLMVVVHVIGSYQVF). Topologically, residues 322-353 (AMPVFDLLERMMVNKFGFKHGVVLRFFTRTIY) are cytoplasmic. A run of 2 helical transmembrane segments spans residues 354–374 (VAFT…LGFF) and 375–395 (GGFG…LIIK). Topologically, residues 396 to 399 (KPRR) are cytoplasmic. The chain crosses the membrane as a helical span at residues 400–420 (FSVTWFVNWISIIVGVFIMLA). The Extracellular portion of the chain corresponds to 421 to 440 (STIGGLRNIIADSSTYSFYA).

This sequence belongs to the amino acid/polyamine transporter 2 family. Amino acid/auxin permease (AAAP) (TC 2.A.18.2) subfamily.

Its subcellular location is the cell membrane. In terms of biological role, amino acid transporter. The sequence is that of Lysine histidine transporter-like 6 from Arabidopsis thaliana (Mouse-ear cress).